Consider the following 677-residue polypeptide: Polyunsaturated fatty acid lipoxygenase ALOX15B (677 aa).

One can recognise a PLAT domain in the interval 2 to 125; that stretch reads AKFRVRVSTG…ELVLREGAAK (124 aa). Residues G15, G17, D39, H40, G42, E44, D86, and A87 each contribute to the Ca(2+) site. One can recognise a Lipoxygenase domain in the interval 126–677; sequence VSWQDHHRTL…PPLIENSVSI (552 aa). 4 residues coordinate Fe cation: H374, H379, H554, and I677.

It belongs to the lipoxygenase family. Requires Fe cation as cofactor.

Its subcellular location is the cytoplasm. The protein localises to the cytosol. It is found in the cell membrane. The protein resides in the cytoskeleton. It localises to the membrane. Its subcellular location is the cell junction. The protein localises to the adherens junction. It is found in the focal adhesion. The protein resides in the nucleus. It catalyses the reaction (5Z,8Z,11Z,14Z)-eicosatetraenoate + O2 = (15S)-hydroperoxy-(5Z,8Z,11Z,13E)-eicosatetraenoate. The enzyme catalyses (9Z,12Z)-octadecadienoate + O2 = 13-hydroperoxy-(9Z,11E)-octadecadienoate. It carries out the reaction (5S)-hydroxy-(6E,8Z,11Z,14Z)-eicosatetraenoate + O2 = (5S)-hydroxy-(15S)-hydroperoxy-(6E,8Z,11Z,13E)-eicosatetraenoate. The catalysed reaction is (5Z,8Z,11Z,14Z)-eicosatetraenoate + O2 = 5-hydroperoxy-(6E,8Z,11Z,14Z)-eicosatetraenoate. It catalyses the reaction (5S,6R)-dihydroxy-(7E,9E,11Z,14Z)-eicosatetraenoate + O2 = (5S,6R)-dihydroxy-(15S)-hydroperoxy-(7E,9E,11Z,13E)-eicosatetraenoate. The enzyme catalyses (5S)-hydroperoxy-(6E,8Z,11Z,14Z)-eicosatetraenoate + O2 = (5S,15S)-dihydroperoxy-(6E,8Z,11Z,13E)-eicosatetraenoate. It carries out the reaction 2-(5Z,8Z,11Z,14Z-eicosatetraenoyl)-glycerol + O2 = 2-[15(S)-hydroperoxy-(5Z,8Z,11Z,13E)-eicosatetraenoyl]-glycerol. The catalysed reaction is (8S)-hydroperoxy-(5Z,9E,11Z,14Z)-eicosatetraenoate + O2 = (8S,15S)-dihydroperoxy-(5Z,9E,11Z,13E)-eicosatetraenoate. It catalyses the reaction N-(5Z,8Z,11Z,14Z)-eicosatetraenoyl-L-alanine + O2 = N-(15S)-hydroperoxy-(5Z,8Z,11Z,13E)-eicosatetraenoyl-alanine. The enzyme catalyses N-(5Z,8Z,11Z,14Z)-eicosatetraenoyl-gamma-aminobutanoate + O2 = N-(15S)-hydroperoxy-(5Z,8Z,11Z,13E)-eicosatetraenoyl-gamma-aminobutanoate. It carries out the reaction N-(5Z,8Z,11Z,14Z)-eicosatetraenoyl-glycine + O2 = N-(15S)-hydroperoxy-(5Z,8Z,11Z,13E)-eicosatetraenoyl-glycine. The catalysed reaction is N-(5Z,8Z,11Z,14Z)-eicosatetraenoyl-taurine + O2 = N-(15S)-hydroperoxy-(5Z,8Z,11Z,13E)-eicosatetraenoyl-taurine. It catalyses the reaction 2-(5Z,8Z,11Z,14Z-eicosatetraenoyl)-glycerol + O2 = 2-[12-hydroperoxy-(5Z,8Z,10E,14Z)-eicosatetraenoyl]-glycerol. The enzyme catalyses 1-octadecanoyl-2-(5Z,8Z,11Z,14Z-eicosatetraenoyl)-sn-glycero-3-phosphocholine + O2 = 1-octadecanoyl-2-(15-hydroperoxy-5Z,8Z,11Z,13E-eicosatetraenoyl)-sn-glycero-3-phosphocholine. It carries out the reaction a 1-acyl-2-(5Z,8Z,11Z,14Z-eicosatetraenoyl)-sn-glycero-3-phospho-(1D-myo-inositol) + O2 = a 1-acyl-2-(15-hydroperoxy-5Z,8Z,11Z,13E-eicosatetraenoyl)-sn-glycero-3-phospho-(1D-myo-inositol). The catalysed reaction is a 1-acyl-2-(8Z,11Z,14Z-eicosatrienoyl)-sn-glycero-3-phospho-(1D-myo-inositol) + O2 = a 1-acyl-2-(15-hydroperoxy-8Z,11Z,13E-eicosatrienoyl)-sn-glycero-3-phospho-(1D-myo-inositol). It catalyses the reaction 1-octadecanoyl-2-(5Z,8Z,11Z,14Z)-eicosatetraenoyl-sn-glycero-3-phosphoethanolamine + O2 = 1-octadecanoyl-2-(15-hydroperoxy-5Z,8Z,11Z,13E-eicosatetraenoyl)-sn-glycero-3-phosphoethanolamine. The enzyme catalyses 1-octadecanoyl-2-(5Z,8Z,11Z,14Z-eicosatetraenoyl)-sn-glycero-3-phospho-(1D-myo-inositol) + O2 = 1-octadecanoyl-2-(15-hydroperoxy-5Z,8Z,11Z,13E-eicosatetraenoyl)-sn-glycero-3-phospho-(1D-myo-inositol). It carries out the reaction (8Z,11Z,14Z)-eicosatrienoate + O2 = 15-hydroperoxy-(8Z,11Z,13E)-eicosatrienoate. The catalysed reaction is (7S)-hydroperoxy-(4Z,8E,10Z,13Z,16Z,19Z)-docosahexaenoate + O2 = (7S,17S)-dihydroperoxy-(4Z,8E,10Z,13Z,15E,19Z)-docosahexaenoate. The protein operates within lipid metabolism; hydroperoxy eicosatetraenoic acid biosynthesis. Non-heme iron-containing dioxygenase that catalyzes the stereo-specific peroxidation of free and esterified polyunsaturated fatty acids (PUFAs) generating a spectrum of bioactive lipid mediators. Inserts a peroxyl group at C15 of arachidonate ((5Z,8Z,11Z,14Z)-eicosatetraenoate) producing (15S)-hydroperoxyeicosatetraenoate/(15S)-HPETE. Also peroxidizes linoleate ((9Z,12Z)-octadecadienoate) to 13-hydroperoxyoctadecadienoate/13-HPODE. Oxygenates arachidonyl derivatives such as 2-arachidonoylglycerol (2-AG) leading to the production and extracellular release of 15-hydroxyeicosatetraenoyl glycerol (15-HETE-G) that acts as a peroxisome proliferator-activated receptor alpha agonist. Has the ability to efficiently class-switch ALOX5 pro-inflammatory mediators into anti-inflammatory intermediates. Participates in the sequential oxidations of DHA ((4Z,7Z,10Z,13Z,16Z,19Z)-docosahexaenoate) to generate specialized pro-resolving mediators (SPMs) resolvin D5 ((7S,17S)-diHPDHA), which can actively down-regulate the immune response and have anti-aggregation properties with platelets. In addition to free PUFAs hydrolyzed from phospholipids, it directly oxidizes PUFAs esterified to membrane-bound phospholipids. Has no detectable 8S-lipoxygenase activity on arachidonate but reacts with (8S)-HPETE to produce (8S,15S)-diHPETE. May regulate progression through the cell cycle and cell proliferation. May also regulate cytokine secretion by macrophages and therefore play a role in the immune response. May also regulate macrophage differentiation into proatherogenic foam cells. The protein is Polyunsaturated fatty acid lipoxygenase ALOX15B of Rattus norvegicus (Rat).